The sequence spans 240 residues: Uridylate kinase (240 aa).

Position 15–18 (15–18 (KLSG)) interacts with ATP. Residues 23–28 (GSEGFG) form an involved in allosteric activation by GTP region. Gly-57 lines the UMP pocket. 2 residues coordinate ATP: Gly-58 and Arg-62. UMP-binding positions include Asp-77 and 138 to 145 (TGNPFFTT). ATP contacts are provided by Thr-165, Tyr-171, and Asp-174.

The protein belongs to the UMP kinase family. Homohexamer.

It is found in the cytoplasm. The enzyme catalyses UMP + ATP = UDP + ADP. The protein operates within pyrimidine metabolism; CTP biosynthesis via de novo pathway; UDP from UMP (UMPK route): step 1/1. Allosterically activated by GTP. Inhibited by UTP. Its function is as follows. Catalyzes the reversible phosphorylation of UMP to UDP. The sequence is that of Uridylate kinase from Photobacterium profundum (strain SS9).